A 325-amino-acid chain; its full sequence is NADH-quinone oxidoreductase subunit H (325 aa).

Transmembrane regions (helical) follow at residues 11–31 (VLIAVLKAVVILVVVVVCGAL), 81–101 (MIFTLAPVIGFVSLLLAFAIV), 114–134 (IGILFFMMMAGLAVYAVLFAG), 149–169 (ASAQTLSYEVFIGLSFMGVVA), 186–206 (MWNVIPQFFGFLTFAIAGVAV), 237–257 (FFVGEYIGIVTVSALIVTMFF), 265–285 (LPPFVWFALKTAFFMVMFILI), and 304–324 (ICLPLTLLNLLATAAVILYNA).

The protein belongs to the complex I subunit 1 family. As to quaternary structure, NDH-1 is composed of 13 different subunits. Subunits NuoA, H, J, K, L, M, N constitute the membrane sector of the complex.

It localises to the cell inner membrane. It carries out the reaction a quinone + NADH + 5 H(+)(in) = a quinol + NAD(+) + 4 H(+)(out). Functionally, NDH-1 shuttles electrons from NADH, via FMN and iron-sulfur (Fe-S) centers, to quinones in the respiratory chain. The immediate electron acceptor for the enzyme in this species is believed to be ubiquinone. Couples the redox reaction to proton translocation (for every two electrons transferred, four hydrogen ions are translocated across the cytoplasmic membrane), and thus conserves the redox energy in a proton gradient. This subunit may bind ubiquinone. The chain is NADH-quinone oxidoreductase subunit H from Photorhabdus laumondii subsp. laumondii (strain DSM 15139 / CIP 105565 / TT01) (Photorhabdus luminescens subsp. laumondii).